A 102-amino-acid chain; its full sequence is Putative defensin-like protein 298 (102 aa).

The signal sequence occupies residues 1–29 (MSASKATMLILFALFLSDILLVSIPRAEA). 6 disulfides stabilise this stretch: cysteine 35-cysteine 53, cysteine 41-cysteine 58, cysteine 46-cysteine 60, cysteine 74-cysteine 93, cysteine 80-cysteine 98, and cysteine 86-cysteine 100.

The protein belongs to the DEFL family.

Its subcellular location is the secreted. The polypeptide is Putative defensin-like protein 298 (Arabidopsis thaliana (Mouse-ear cress)).